A 496-amino-acid polypeptide reads, in one-letter code: Aldehyde dehydrogenase (496 aa).

Active-site residues include E263 and C296.

This sequence belongs to the aldehyde dehydrogenase family.

Its subcellular location is the cytoplasm. It carries out the reaction an aldehyde + NAD(+) + H2O = a carboxylate + NADH + 2 H(+). This chain is Aldehyde dehydrogenase (CLAH10), found in Davidiella tassiana (Mycosphaerella tassiana).